The sequence spans 350 residues: Anthranilate phosphoribosyltransferase (350 aa).

5-phospho-alpha-D-ribose 1-diphosphate-binding positions include G94, 97–98, T102, 104–107, 122–130, and S134; these read GS, NVST, and KHGNRSVSS. Residue G94 participates in anthranilate binding. Position 106 (S106) interacts with Mg(2+). N125 contributes to the anthranilate binding site. R180 serves as a coordination point for anthranilate. Residues D239 and E240 each coordinate Mg(2+).

It belongs to the anthranilate phosphoribosyltransferase family. Homodimer. Mg(2+) is required as a cofactor.

It catalyses the reaction N-(5-phospho-beta-D-ribosyl)anthranilate + diphosphate = 5-phospho-alpha-D-ribose 1-diphosphate + anthranilate. Its pathway is amino-acid biosynthesis; L-tryptophan biosynthesis; L-tryptophan from chorismate: step 2/5. Its function is as follows. Catalyzes the transfer of the phosphoribosyl group of 5-phosphorylribose-1-pyrophosphate (PRPP) to anthranilate to yield N-(5'-phosphoribosyl)-anthranilate (PRA). This chain is Anthranilate phosphoribosyltransferase, found in Geotalea uraniireducens (strain Rf4) (Geobacter uraniireducens).